Here is a 655-residue protein sequence, read N- to C-terminus: DNA topoisomerase 4 subunit B (655 aa).

Residues Tyr9, Asn49, Asp76, 116-122 (GLHGVGA), and Lys340 contribute to the ATP site. The segment covering 387-397 (AARKAREEARS) has biased composition (basic and acidic residues). The interval 387 to 419 (AARKAREEARSGKKRKKSEATLSGKLTPAGSRN) is disordered. One can recognise a Toprim domain in the interval 423-537 (NELYLVEGDS…HGKVFIALPP (115 aa)). Residues Glu429, Asp502, and Asp504 each contribute to the Mg(2+) site.

Belongs to the type II topoisomerase family. ParE type 2 subfamily. As to quaternary structure, heterotetramer composed of ParC and ParE. The cofactor is Mg(2+). Mn(2+) is required as a cofactor. It depends on Ca(2+) as a cofactor.

It carries out the reaction ATP-dependent breakage, passage and rejoining of double-stranded DNA.. Its function is as follows. Topoisomerase IV is essential for chromosome segregation. It relaxes supercoiled DNA. Performs the decatenation events required during the replication of a circular DNA molecule. The sequence is that of DNA topoisomerase 4 subunit B from Bacillus subtilis (strain 168).